The primary structure comprises 114 residues: Iron-sulfur cluster insertion protein ErpA (114 aa).

Residues C42, C106, and C108 each contribute to the iron-sulfur cluster site.

Belongs to the HesB/IscA family. In terms of assembly, homodimer. The cofactor is iron-sulfur cluster.

Functionally, required for insertion of 4Fe-4S clusters for at least IspG. This is Iron-sulfur cluster insertion protein ErpA from Pseudoalteromonas atlantica (strain T6c / ATCC BAA-1087).